A 1156-amino-acid chain; its full sequence is Mastermind-like protein 2 (1156 aa).

The tract at residues 81 to 165 (QHGQGARKAG…PPASTPGDQR (85 aa)) is disordered. Low complexity predominate over residues 113–122 (PAASQAAATA). A compositionally biased stretch (polar residues) spans 153-165 (EQQPPASTPGDQR). At serine 175 the chain carries Phosphoserine. Disordered stretches follow at residues 340 to 359 (FNIDLGQQSQRSTPRPSLPM), 369 to 506 (SPGL…GSGQ), 531 to 630 (QQKP…QQQQ), 658 to 680 (QQQQQQQQPSSQPAQSLPSQPLL), 705 to 743 (YQVSQQQRQDQHSVVGQNTGPSPSPNPCSNPNTGSGYMN), 784 to 820 (IAPQDQINRHLSRPPPDYKDQRRNVGNMQPTAQYSGG), and 1059 to 1100 (LPNL…FQGT). Composition is skewed to polar residues over residues 344–354 (LGQQSQRSTPR), 371–380 (GLTQGPSGSP), 393–419 (MANSALSTSSPIPSVPQSQAQPQTGSG), and 428–437 (QEVSHAQQLK). Residues 440 to 470 (AANRQQHARMQQHQQQHQPTNWSALPSSAGP) are compositionally biased toward low complexity. Polar residues-rich tracts occupy residues 484–496 (SFGQQTFSPQSSP), 532–543 (QKPQDLSRSFIN), and 563–587 (NSDQANQQMPSVLPSQNKPSLLHYT). Low complexity predominate over residues 588-630 (QQQQQQQQQQQQQQQQQQQQQQQQQQQQQQQQQQSSISAQQQQ). Low complexity-rich tracts occupy residues 706-725 (QVSQQQRQDQHSVVGQNTGP) and 733-743 (SNPNTGSGYMN). Over residues 807–820 (NVGNMQPTAQYSGG) the composition is skewed to polar residues.

The protein belongs to the mastermind family. As to quaternary structure, interacts through its N-terminal region with the ankyrin repeat region of the Notch proteins NOTCH1, NOTCH2, NOTCH3 and NOTCH4. Forms a DNA-binding complex with Notch proteins and RBPSUH/RBP-J kappa. Widely expressed with high levels detected in placenta, salivary gland and skeletal muscle.

It is found in the nucleus speckle. Functionally, acts as a transcriptional coactivator for NOTCH proteins. Has been shown to amplify NOTCH-induced transcription of HES1. Potentiates activation by NOTCH3 and NOTCH4 more efficiently than MAML1 or MAML3. The protein is Mastermind-like protein 2 (MAML2) of Homo sapiens (Human).